A 219-amino-acid polypeptide reads, in one-letter code: Thiamine-phosphate synthase (219 aa).

4-amino-2-methyl-5-(diphosphooxymethyl)pyrimidine-binding positions include 44-48 (QFREK) and N79. The Mg(2+) site is built by D80 and D99. Residue S117 participates in 4-amino-2-methyl-5-(diphosphooxymethyl)pyrimidine binding. 143 to 145 (TST) serves as a coordination point for 2-[(2R,5Z)-2-carboxy-4-methylthiazol-5(2H)-ylidene]ethyl phosphate. K146 lines the 4-amino-2-methyl-5-(diphosphooxymethyl)pyrimidine pocket. 2-[(2R,5Z)-2-carboxy-4-methylthiazol-5(2H)-ylidene]ethyl phosphate is bound by residues G175 and 195–196 (IS).

This sequence belongs to the thiamine-phosphate synthase family. Requires Mg(2+) as cofactor.

The enzyme catalyses 2-[(2R,5Z)-2-carboxy-4-methylthiazol-5(2H)-ylidene]ethyl phosphate + 4-amino-2-methyl-5-(diphosphooxymethyl)pyrimidine + 2 H(+) = thiamine phosphate + CO2 + diphosphate. It catalyses the reaction 2-(2-carboxy-4-methylthiazol-5-yl)ethyl phosphate + 4-amino-2-methyl-5-(diphosphooxymethyl)pyrimidine + 2 H(+) = thiamine phosphate + CO2 + diphosphate. It carries out the reaction 4-methyl-5-(2-phosphooxyethyl)-thiazole + 4-amino-2-methyl-5-(diphosphooxymethyl)pyrimidine + H(+) = thiamine phosphate + diphosphate. It functions in the pathway cofactor biosynthesis; thiamine diphosphate biosynthesis; thiamine phosphate from 4-amino-2-methyl-5-diphosphomethylpyrimidine and 4-methyl-5-(2-phosphoethyl)-thiazole: step 1/1. Condenses 4-methyl-5-(beta-hydroxyethyl)thiazole monophosphate (THZ-P) and 2-methyl-4-amino-5-hydroxymethyl pyrimidine pyrophosphate (HMP-PP) to form thiamine monophosphate (TMP). In Bacillus cereus (strain AH187), this protein is Thiamine-phosphate synthase.